The sequence spans 223 residues: uncharacterized protein (223 aa).

To M.jannaschii MJ1453.

This is an uncharacterized protein from Methanothermobacter thermautotrophicus (strain ATCC 29096 / DSM 1053 / JCM 10044 / NBRC 100330 / Delta H) (Methanobacterium thermoautotrophicum).